The following is a 306-amino-acid chain: Mycothiol acetyltransferase (306 aa).

N-acetyltransferase domains lie at valine 17 to proline 163 and leucine 166 to alanine 306. Glutamate 48 serves as a coordination point for 1D-myo-inositol 2-(L-cysteinylamino)-2-deoxy-alpha-D-glucopyranoside. Residue isoleucine 89–valine 91 coordinates acetyl-CoA. The 1D-myo-inositol 2-(L-cysteinylamino)-2-deoxy-alpha-D-glucopyranoside site is built by glutamate 192, lysine 232, and glutamate 239. Residues leucine 243–valine 245 and alanine 250–serine 256 each bind acetyl-CoA. Tyrosine 277 contacts 1D-myo-inositol 2-(L-cysteinylamino)-2-deoxy-alpha-D-glucopyranoside.

This sequence belongs to the acetyltransferase family. MshD subfamily. Monomer.

It carries out the reaction 1D-myo-inositol 2-(L-cysteinylamino)-2-deoxy-alpha-D-glucopyranoside + acetyl-CoA = mycothiol + CoA + H(+). Its function is as follows. Catalyzes the transfer of acetyl from acetyl-CoA to desacetylmycothiol (Cys-GlcN-Ins) to form mycothiol. This chain is Mycothiol acetyltransferase, found in Clavibacter michiganensis subsp. michiganensis (strain NCPPB 382).